Here is a 490-residue protein sequence, read N- to C-terminus: Betaine aldehyde dehydrogenase (490 aa).

Ser26, Ile27, and Asp93 together coordinate K(+). 150 to 152 (GAW) contributes to the NAD(+) binding site. The Charge relay system role is filled by Lys162. Residues 176–179 (KPSE) and 230–233 (GVET) each bind NAD(+). Leu246 contributes to the K(+) binding site. Glu252 (proton acceptor) is an active-site residue. Residues Gly254, Cys286, and Glu387 each coordinate NAD(+). Cys286 (nucleophile) is an active-site residue. Position 286 is a cysteine sulfenic acid (-SOH) (Cys286). Positions 457 and 460 each coordinate K(+). The active-site Charge relay system is Glu464.

It belongs to the aldehyde dehydrogenase family. As to quaternary structure, dimer of dimers. It depends on K(+) as a cofactor.

It carries out the reaction betaine aldehyde + NAD(+) + H2O = glycine betaine + NADH + 2 H(+). The protein operates within amine and polyamine biosynthesis; betaine biosynthesis via choline pathway; betaine from betaine aldehyde: step 1/1. Its function is as follows. Involved in the biosynthesis of the osmoprotectant glycine betaine. Catalyzes the irreversible oxidation of betaine aldehyde to the corresponding acid. The polypeptide is Betaine aldehyde dehydrogenase (Acinetobacter baumannii (strain AB307-0294)).